Here is a 141-residue protein sequence, read N- to C-terminus: Aspartate 1-decarboxylase (141 aa).

The active-site Schiff-base intermediate with substrate; via pyruvic acid is the Ser25. Residue Ser25 is modified to Pyruvic acid (Ser). Thr57 is a substrate binding site. Tyr58 functions as the Proton donor in the catalytic mechanism. 73-75 (GAA) contacts substrate.

It belongs to the PanD family. Heterooctamer of four alpha and four beta subunits. The cofactor is pyruvate. Post-translationally, is synthesized initially as an inactive proenzyme, which is activated by self-cleavage at a specific serine bond to produce a beta-subunit with a hydroxyl group at its C-terminus and an alpha-subunit with a pyruvoyl group at its N-terminus.

It localises to the cytoplasm. It carries out the reaction L-aspartate + H(+) = beta-alanine + CO2. It participates in cofactor biosynthesis; (R)-pantothenate biosynthesis; beta-alanine from L-aspartate: step 1/1. Its function is as follows. Catalyzes the pyruvoyl-dependent decarboxylation of aspartate to produce beta-alanine. The polypeptide is Aspartate 1-decarboxylase (Salinispora arenicola (strain CNS-205)).